Here is a 157-residue protein sequence, read N- to C-terminus: Small ribosomal subunit protein uS7 (157 aa).

It belongs to the universal ribosomal protein uS7 family. In terms of assembly, part of the 30S ribosomal subunit. Contacts proteins S9 and S11.

Its function is as follows. One of the primary rRNA binding proteins, it binds directly to 16S rRNA where it nucleates assembly of the head domain of the 30S subunit. Is located at the subunit interface close to the decoding center, probably blocks exit of the E-site tRNA. This chain is Small ribosomal subunit protein uS7, found in Stenotrophomonas maltophilia (strain R551-3).